Reading from the N-terminus, the 319-residue chain is Acetyl-coenzyme A carboxylase carboxyl transferase subunit alpha (319 aa).

Positions 35–296 (NIDEEVHRLR…KAQLLEDLAD (262 aa)) constitute a CoA carboxyltransferase C-terminal domain.

It belongs to the AccA family. Acetyl-CoA carboxylase is a heterohexamer composed of biotin carboxyl carrier protein (AccB), biotin carboxylase (AccC) and two subunits each of ACCase subunit alpha (AccA) and ACCase subunit beta (AccD).

The protein resides in the cytoplasm. It carries out the reaction N(6)-carboxybiotinyl-L-lysyl-[protein] + acetyl-CoA = N(6)-biotinyl-L-lysyl-[protein] + malonyl-CoA. It participates in lipid metabolism; malonyl-CoA biosynthesis; malonyl-CoA from acetyl-CoA: step 1/1. In terms of biological role, component of the acetyl coenzyme A carboxylase (ACC) complex. First, biotin carboxylase catalyzes the carboxylation of biotin on its carrier protein (BCCP) and then the CO(2) group is transferred by the carboxyltransferase to acetyl-CoA to form malonyl-CoA. The protein is Acetyl-coenzyme A carboxylase carboxyl transferase subunit alpha of Salmonella paratyphi C (strain RKS4594).